Reading from the N-terminus, the 348-residue chain is Phosphoribosylformylglycinamidine cyclo-ligase (348 aa).

This sequence belongs to the AIR synthase family.

It is found in the cytoplasm. It catalyses the reaction 2-formamido-N(1)-(5-O-phospho-beta-D-ribosyl)acetamidine + ATP = 5-amino-1-(5-phospho-beta-D-ribosyl)imidazole + ADP + phosphate + H(+). Its pathway is purine metabolism; IMP biosynthesis via de novo pathway; 5-amino-1-(5-phospho-D-ribosyl)imidazole from N(2)-formyl-N(1)-(5-phospho-D-ribosyl)glycinamide: step 2/2. This Cereibacter sphaeroides (strain ATCC 17025 / ATH 2.4.3) (Rhodobacter sphaeroides) protein is Phosphoribosylformylglycinamidine cyclo-ligase.